A 120-amino-acid polypeptide reads, in one-letter code: Phosphoribosyl-AMP cyclohydrolase (120 aa).

A Mg(2+)-binding site is contributed by Asp75. Cys76 is a binding site for Zn(2+). Positions 77 and 79 each coordinate Mg(2+). Zn(2+) contacts are provided by Cys92 and Cys99.

The protein belongs to the PRA-CH family. As to quaternary structure, homodimer. It depends on Mg(2+) as a cofactor. Requires Zn(2+) as cofactor.

The protein resides in the cytoplasm. The enzyme catalyses 1-(5-phospho-beta-D-ribosyl)-5'-AMP + H2O = 1-(5-phospho-beta-D-ribosyl)-5-[(5-phospho-beta-D-ribosylamino)methylideneamino]imidazole-4-carboxamide. The protein operates within amino-acid biosynthesis; L-histidine biosynthesis; L-histidine from 5-phospho-alpha-D-ribose 1-diphosphate: step 3/9. In terms of biological role, catalyzes the hydrolysis of the adenine ring of phosphoribosyl-AMP. The chain is Phosphoribosyl-AMP cyclohydrolase from Haloarcula marismortui (strain ATCC 43049 / DSM 3752 / JCM 8966 / VKM B-1809) (Halobacterium marismortui).